The following is a 160-amino-acid chain: Phosphopantetheine adenylyltransferase (160 aa).

A substrate-binding site is contributed by Ser-8. Residues 8–9 (SF) and His-16 contribute to the ATP site. Residues Lys-40, Leu-74, and Lys-88 each contribute to the substrate site. Residues 89-91 (GLR), Glu-99, and 124-130 (YSFVSST) each bind ATP.

This sequence belongs to the bacterial CoaD family. Homohexamer. Requires Mg(2+) as cofactor.

The protein resides in the cytoplasm. It carries out the reaction (R)-4'-phosphopantetheine + ATP + H(+) = 3'-dephospho-CoA + diphosphate. It functions in the pathway cofactor biosynthesis; coenzyme A biosynthesis; CoA from (R)-pantothenate: step 4/5. Its function is as follows. Reversibly transfers an adenylyl group from ATP to 4'-phosphopantetheine, yielding dephospho-CoA (dPCoA) and pyrophosphate. The chain is Phosphopantetheine adenylyltransferase from Thermus thermophilus (strain ATCC BAA-163 / DSM 7039 / HB27).